A 589-amino-acid polypeptide reads, in one-letter code: MASQAANLWVLLGLGLAGILMLTKKLKKTVREDFGAFIDKLMLLPPPQPAPPKAPHPLTGLTFAVSDVFDITGYVTGFGHPDWVRTHEAASSTSPVVSTLVEGGATCVGKTVVDEFAFSISGENKHYDSPTNPAAPTRIPGGACSGAAVAVATNAVDFALGIDTVGGVRVPAGYCGVLGFKSSYGAISNTGIIPVSSSLDSVGWFARDPNTLRRVGHVLLQLPFATQRNPRQIILADDCFQLLKIPVDRITQVVTKSAEKLFGRQLLKHQNLETYFETKVPSLKEFARTKAIANTKVSTSRLLANVMQLLQRHEFLQNHGDWINTVKPAIDPVILSQVCENPELTNEETENLNAIRNETRVAIGSLLKDDGILVIPTLPAVPPKLGSKEITSEDYQNRASSLLSIASISGCCQVTVPLGHHEKCPISVSFIGRHGGDRFLLDTVQTMYPSLQEYSSIVTDPKSSKKAITKEESAEIAKEKGNQAFKEKLWQKAIGLYSEAIKLSDNNATYYSNRAAAYLELGGFLQAEEDCTKAITLDKKNVKAYLRRGTAREMLGDCKGAIEDFRYALVLEPNNKRASLSAERLRKFQ.

Position 1 (M1) is a topological domain, chloroplast intermembrane. The chain crosses the membrane as a helical span at residues 2-22 (ASQAANLWVLLGLGLAGILML). Residues 23 to 141 (TKKLKKTVRE…NPAAPTRIPG (119 aa)) lie on the Cytoplasmic side of the membrane. A helical transmembrane segment spans residues 142–162 (GACSGAAVAVATNAVDFALGI). The Chloroplast intermembrane portion of the chain corresponds to 163 to 398 (DTVGGVRVPA…EITSEDYQNR (236 aa)). The chain crosses the membrane as a helical span at residues 399-419 (ASSLLSIASISGCCQVTVPLG). At 420 to 589 (HHEKCPISVS…LSAERLRKFQ (170 aa)) the chain is on the cytoplasmic side. 3 TPR repeats span residues 474–507 (AEIAKEKGNQAFKEKLWQKAIGLYSEAIKLSDNN), 508–541 (ATYYSNRAAAYLELGGFLQAEEDCTKAITLDKKN), and 542–575 (VKAYLRRGTAREMLGDCKGAIEDFRYALVLEPNN).

In terms of assembly, part of the Toc complex and of the intermembrane space complex. As to expression, expressed in roots, cotyledons, leaves and flower buds.

Its subcellular location is the plastid. It is found in the chloroplast outer membrane. In terms of biological role, chaperone receptor mediating Hsp90-dependent protein targeting to chloroplasts. Bi-functional preprotein receptor acting on both sides of the membrane. Not essential for an efficient import of pre-proteins into plastids. In Arabidopsis thaliana (Mouse-ear cress), this protein is Outer envelope protein 64, chloroplastic (OEP64).